Reading from the N-terminus, the 305-residue chain is Glycine--tRNA ligase alpha subunit (305 aa).

It belongs to the class-II aminoacyl-tRNA synthetase family. In terms of assembly, tetramer of two alpha and two beta subunits.

It is found in the cytoplasm. It carries out the reaction tRNA(Gly) + glycine + ATP = glycyl-tRNA(Gly) + AMP + diphosphate. This chain is Glycine--tRNA ligase alpha subunit, found in Streptococcus pneumoniae (strain 70585).